The chain runs to 182 residues: Large ribosomal subunit protein uL10 (182 aa).

It belongs to the universal ribosomal protein uL10 family. Part of the ribosomal stalk of the 50S ribosomal subunit. The N-terminus interacts with L11 and the large rRNA to form the base of the stalk. The C-terminus forms an elongated spine to which L12 dimers bind in a sequential fashion forming a multimeric L10(L12)X complex.

In terms of biological role, forms part of the ribosomal stalk, playing a central role in the interaction of the ribosome with GTP-bound translation factors. This Koribacter versatilis (strain Ellin345) protein is Large ribosomal subunit protein uL10.